A 283-amino-acid polypeptide reads, in one-letter code: Pantothenate synthetase (283 aa).

30–37 (MGNLHNGH) is an ATP binding site. His-37 functions as the Proton donor in the catalytic mechanism. Gln-61 serves as a coordination point for (R)-pantoate. Residue Gln-61 participates in beta-alanine binding. 149–152 (GEKD) contributes to the ATP binding site. Gln-155 is a (R)-pantoate binding site. 186–189 (LSSR) is an ATP binding site.

The protein belongs to the pantothenate synthetase family. As to quaternary structure, homodimer.

It is found in the cytoplasm. It carries out the reaction (R)-pantoate + beta-alanine + ATP = (R)-pantothenate + AMP + diphosphate + H(+). Its pathway is cofactor biosynthesis; (R)-pantothenate biosynthesis; (R)-pantothenate from (R)-pantoate and beta-alanine: step 1/1. Functionally, catalyzes the condensation of pantoate with beta-alanine in an ATP-dependent reaction via a pantoyl-adenylate intermediate. The chain is Pantothenate synthetase from Shigella flexneri serotype 5b (strain 8401).